A 404-amino-acid chain; its full sequence is Propionate kinase (404 aa).

It belongs to the acetokinase family. PduW subfamily.

The protein localises to the cytoplasm. The enzyme catalyses propanoate + ATP = propanoyl phosphate + ADP. It participates in polyol metabolism; 1,2-propanediol degradation. In terms of biological role, works with phosphate acetyltransferase (pta) to capture exogenous propionate and regenerate propionyl-CoA during degradation of 1,2-propanediol (1,2-PD). The protein is Propionate kinase of Klebsiella pneumoniae (strain 342).